A 787-amino-acid chain; its full sequence is Protein PAT1 homolog 2 (787 aa).

Disordered stretches follow at residues 94–120 (KHLG…WTQD), 134–221 (EQVQ…NASP), 338–374 (VREH…GLQF), 411–445 (LAKK…QQPQ), and 765–787 (VSES…FVRG). Polar residues predominate over residues 105–120 (GSFSRESSTATDWTQD). The segment covering 142–153 (SSQPQSSPNSNS) has biased composition (low complexity). 3 stretches are compositionally biased toward polar residues: residues 154–171 (LYRT…QHYS), 180–198 (STFT…SSPS), and 208–221 (GGSQ…NASP). Phosphoserine occurs at positions 184 and 192. Positions 341–353 (HKHKSSHRSRKNR) are enriched in basic residues. Composition is skewed to polar residues over residues 355–373 (GISQ…SGLQ) and 436–445 (SRNSSDQQPQ).

Its function is as follows. Activator of mRNA decapping. Involved in mRNA decay via decapping. The polypeptide is Protein PAT1 homolog 2 (Arabidopsis thaliana (Mouse-ear cress)).